The sequence spans 404 residues: Cysteine desulfurase IscS (404 aa).

Residues Ala75 to Thr76, Asn155, Gln183, and Ser203 to His205 each bind pyridoxal 5'-phosphate. Lys206 is subject to N6-(pyridoxal phosphate)lysine. Position 243 (Thr243) interacts with pyridoxal 5'-phosphate. Residue Cys328 is the Cysteine persulfide intermediate of the active site. A [2Fe-2S] cluster-binding site is contributed by Cys328.

Belongs to the class-V pyridoxal-phosphate-dependent aminotransferase family. NifS/IscS subfamily. In terms of assembly, homodimer. Forms a heterotetramer with IscU, probably interacts with other sulfur acceptors. The cofactor is pyridoxal 5'-phosphate.

Its subcellular location is the cytoplasm. It catalyses the reaction (sulfur carrier)-H + L-cysteine = (sulfur carrier)-SH + L-alanine. It functions in the pathway cofactor biosynthesis; iron-sulfur cluster biosynthesis. Its activity is regulated as follows. Inhibited by equimolar N-iodoacetyl-N'-(5-sulfo-1-naphthyl)ethylenediamine. Functionally, master enzyme that delivers sulfur to a number of partners involved in Fe-S cluster assembly, tRNA modification or cofactor biosynthesis. Catalyzes the removal of elemental sulfur from cysteine to produce alanine via an enzyme-bound persulfide intermediate. Functions as a sulfur delivery protein for Fe-S cluster synthesis. Cluster assembly on IscU homodimers proceeds sequentially from 1 2Fe-2S per dimer, to 2 2Fe-2S per dimer and finally 1 4Fe-4S per dimer. The chain is Cysteine desulfurase IscS from Azotobacter vinelandii.